The following is a 931-amino-acid chain: Valine--tRNA ligase (931 aa).

The 'HIGH' region motif lies at 42–52 (PNVTGSLHMGH). The 'KMSKS' region signature appears at 523 to 527 (KMSKS). Lys-526 serves as a coordination point for ATP. A coiled-coil region spans residues 859-931 (MAGLIDKEAE…EEQLEKIKYL (73 aa)).

This sequence belongs to the class-I aminoacyl-tRNA synthetase family. ValS type 1 subfamily. As to quaternary structure, monomer.

It localises to the cytoplasm. It catalyses the reaction tRNA(Val) + L-valine + ATP = L-valyl-tRNA(Val) + AMP + diphosphate. Catalyzes the attachment of valine to tRNA(Val). As ValRS can inadvertently accommodate and process structurally similar amino acids such as threonine, to avoid such errors, it has a 'posttransfer' editing activity that hydrolyzes mischarged Thr-tRNA(Val) in a tRNA-dependent manner. This Alcanivorax borkumensis (strain ATCC 700651 / DSM 11573 / NCIMB 13689 / SK2) protein is Valine--tRNA ligase.